Here is a 474-residue protein sequence, read N- to C-terminus: Bifunctional protein HldE (474 aa).

The tract at residues Met-1–Ser-317 is ribokinase. Asn-194–Glu-197 serves as a coordination point for ATP. The active site involves Asp-263. A cytidylyltransferase region spans residues Phe-343–Pro-474.

It in the N-terminal section; belongs to the carbohydrate kinase PfkB family. In the C-terminal section; belongs to the cytidylyltransferase family. Homodimer.

The enzyme catalyses D-glycero-beta-D-manno-heptose 7-phosphate + ATP = D-glycero-beta-D-manno-heptose 1,7-bisphosphate + ADP + H(+). The catalysed reaction is D-glycero-beta-D-manno-heptose 1-phosphate + ATP + H(+) = ADP-D-glycero-beta-D-manno-heptose + diphosphate. It functions in the pathway nucleotide-sugar biosynthesis; ADP-L-glycero-beta-D-manno-heptose biosynthesis; ADP-L-glycero-beta-D-manno-heptose from D-glycero-beta-D-manno-heptose 7-phosphate: step 1/4. It participates in nucleotide-sugar biosynthesis; ADP-L-glycero-beta-D-manno-heptose biosynthesis; ADP-L-glycero-beta-D-manno-heptose from D-glycero-beta-D-manno-heptose 7-phosphate: step 3/4. Catalyzes the phosphorylation of D-glycero-D-manno-heptose 7-phosphate at the C-1 position to selectively form D-glycero-beta-D-manno-heptose-1,7-bisphosphate. Its function is as follows. Catalyzes the ADP transfer from ATP to D-glycero-beta-D-manno-heptose 1-phosphate, yielding ADP-D-glycero-beta-D-manno-heptose. The polypeptide is Bifunctional protein HldE (Azotobacter vinelandii (strain DJ / ATCC BAA-1303)).